A 446-amino-acid polypeptide reads, in one-letter code: N-succinylarginine dihydrolase (446 aa).

Residues 19–28 (AGLSFGNVAS), N110, and 137–138 (HR) each bind substrate. E174 is a catalytic residue. Residue R213 participates in substrate binding. Residue H249 is part of the active site. Residues D251 and N364 each coordinate substrate. Residue C370 is the Nucleophile of the active site.

It belongs to the succinylarginine dihydrolase family. Homodimer.

The enzyme catalyses N(2)-succinyl-L-arginine + 2 H2O + 2 H(+) = N(2)-succinyl-L-ornithine + 2 NH4(+) + CO2. It participates in amino-acid degradation; L-arginine degradation via AST pathway; L-glutamate and succinate from L-arginine: step 2/5. Its function is as follows. Catalyzes the hydrolysis of N(2)-succinylarginine into N(2)-succinylornithine, ammonia and CO(2). The sequence is that of N-succinylarginine dihydrolase from Burkholderia multivorans (strain ATCC 17616 / 249).